Reading from the N-terminus, the 64-residue chain is Alpha-toxin Amm5 (64 aa).

The LCN-type CS-alpha/beta domain maps to 2 to 64 (KDGYIIDDLN…VSIKEKGRCN (63 aa)). 4 disulfide bridges follow: cysteine 12/cysteine 63, cysteine 16/cysteine 36, cysteine 22/cysteine 46, and cysteine 26/cysteine 48. Asparagine 64 carries the post-translational modification Asparagine amide.

As to expression, expressed by the venom gland.

Its subcellular location is the secreted. Alpha toxins bind voltage-independently at site-3 of sodium channels (Nav) and inhibit the inactivation of the activated channels, thereby blocking neuronal transmission. This is Alpha-toxin Amm5 from Androctonus mauritanicus mauritanicus (Scorpion).